The following is a 96-amino-acid chain: Protein Vpr (96 aa).

The homooligomerization stretch occupies residues 1 to 42 (MEQAPEDQGPQREPHNEWTLELLEEIKNEAVRHFPRVWLHQL). Phosphoserine; by host occurs at positions 79, 94, and 96.

Belongs to the HIV-1 VPR protein family. In terms of assembly, homooligomer, may form homodimer. Interacts with p6-gag region of the Pr55 Gag precursor protein through a (Leu-X-X)4 motif near the C-terminus of the P6gag protein. Interacts with host UNG. May interact with host RAD23A/HHR23A. Interacts with host VPRBP/DCAF1, leading to hijack the CUL4A-RBX1-DDB1-DCAF1/VPRBP complex, mediating ubiquitination of host proteins such as TERT and ZGPAT and arrest of the cell cycle in G2 phase. Phosphorylated on several residues by host. These phosphorylations regulate VPR activity for the nuclear import of the HIV-1 pre-integration complex.

It localises to the virion. The protein localises to the host nucleus. The protein resides in the host extracellular space. In terms of biological role, during virus replication, may deplete host UNG protein, and incude G2-M cell cycle arrest. Acts by targeting specific host proteins for degradation by the 26S proteasome, through association with the cellular CUL4A-DDB1 E3 ligase complex by direct interaction with host VPRPB/DCAF-1. Cell cycle arrest reportedly occurs within hours of infection and is not blocked by antiviral agents, suggesting that it is initiated by the VPR carried into the virion. Additionally, VPR induces apoptosis in a cell cycle dependent manner suggesting that these two effects are mechanistically linked. Detected in the serum and cerebrospinal fluid of AIDS patient, VPR may also induce cell death to bystander cells. During virus entry, plays a role in the transport of the viral pre-integration (PIC) complex to the host nucleus. This function is crucial for viral infection of non-dividing macrophages. May act directly at the nuclear pore complex, by binding nucleoporins phenylalanine-glycine (FG)-repeat regions. The sequence is that of Protein Vpr from Homo sapiens (Human).